The primary structure comprises 231 residues: uncharacterized protein (231 aa).

Residues 4–116 (RILVVEDDED…ELHARVIAQL (113 aa)) enclose the Response regulatory domain. Asp-52 carries the post-translational modification 4-aspartylphosphate. Residues 129 to 230 (EETFLIGGKL…EWGRGYRFGA (102 aa)) constitute a DNA-binding region (ompR/PhoB-type).

In terms of processing, phosphorylated by YrkQ.

The protein localises to the cytoplasm. Functionally, member of the two-component regulatory system YrkQ/YrkP. This is an uncharacterized protein from Bacillus subtilis (strain 168).